The following is a 100-amino-acid chain: Defensin-6 (100 aa).

The signal sequence occupies residues 1-19 (MRTLTILTAVLLVALQAKA). Residues 20 to 68 (EPLQAEDDPLQAKAYEADAQEQRGANDQDFAVSFAEDASSSLRALGSTR) constitute a propeptide that is removed on maturation. Intrachain disulfides connect C72–C99, C74–C88, and C78–C98.

Belongs to the alpha-defensin family. In terms of assembly, homodimer. Self-assembles into higher-order oligomers termed nanonets, fibril-like structures that entrap microbes. Self-assembly into nanonets seems to protect against proteolytic digestion in duodenal fluid. Interacts with Y.enterocolitica invasin and S.typhimurium fliC/flagellin; the interaction creates an anchoring site for progressive DEFA6 self-assembly into nanonets. In terms of processing, proteolytically cleaved by trypsin at Arg-68; the propeptide is stored in the tissue of the small intestine and the mature peptide is found in the luminal fluid; cleavage may occur during or after release into the lumen. The N-terminal propeptide region suppresses self-assembly and renders DEFA6 propeptide unable to agglutinate bacteria and protect human epithelial cells from bacterial invasion. Under reducing conditions, naturally present in the gut owing to the low redox potential or enzymatically generated by the thioredoxin system, the disulfide bridges are opened leading to a conformational change of DEF6, thereby changing its antimicrobial spectrum. The reduced form exhibits inhibitory activity against anaerobic bacteria, in contrast to the minimal antimicrobial activity of the disulfide-linked oxidized form. The formation of higher-order nanonets and bacterial entrapment is independent of the redox state. As to expression, expressed in Paneth cells of the small intestine (at protein level).

Its subcellular location is the secreted. The protein resides in the cytoplasmic vesicle. It localises to the secretory vesicle. Functionally, host-defense peptide that contributes to intestinal innate immunity and mediates homeostasis at mucosal surfaces by forming higher-order oligomers that capture bacteria and prevent microbial invasion of the epithelium. After binding to bacterial surface proteins, undergoes ordered self-assembly to form fibril-like nanonets that surround and entangle bacteria and thereby prevent bacterial invasion across the epithelial barrier. Entangles and agglutinates Gram-negative bacteria, such as E.coli, S.typhimurium and Y.enterocolitica, and Gram-positive bacteria such as L.monocytogenes, thereby protecting the intestine against invasion by enteric bacterial pathogens. Blocks adhesion of C.albicans to intestinal epithelial cells and thereby suppresses fungal invasion of epithelial cells and biofilm formation. Under reducing conditions and in an acidic environment similar to the intestinal milieu, exhibits inhibitory activity against anaerobic bacteria such as B.adolescentis, L.acidophilus and B.breve, as well as B.longum and S.thermophilus, possibly by leading to alterations in bacterial cell envelope structures. The disulfide-linked oxidized form exhibits negligible antimicrobial activity against Gram-negative and Gram-positive bacteria, as compared to the enteric defensin DEFA5. The protein is Defensin-6 (DEFA6) of Homo sapiens (Human).